The following is a 508-amino-acid chain: MTTIFRLASSSSPSLRHDATPHNFHIRKTSISNTFSFSSKNSLSFKRILTSGGSRRFIVAASPPTEDAVVATEPLTKQDLIDYLASGCKTKDKWRIGTEHEKFGFELGSLRPMKYEQISELLNGIAERFDWDKVMEGDNIIGLKQGKQSISLEPGGQFELSGAPLETLHQTCAEVNSHLYQVKAVAEEMGIGFLGIGFQPKWERKDIPMMPKGRYEIMKKYMPKVGSLGLDMMFRTCTVQVNLDFSSEADMIRKFRAGLALQPIATALFANSPFTDGKPNGFVSMRSHIWTDTDKDRTGMLPFVFDDSFGFEQYVDFALDVPMYFVYRKKKYIDCTGMTFRDFLAGKLPCIPGELPTLNDWENHLTTIFPEVRLKRYLEMRGADGGPWRRLCALPAFWVGILYDEVSLQRVLDMTADWTLEEREMLRNKVTVTGLKTPFRDGLLKHVAEEVLELAKDGLERRGFKESGFLNAVAEVVRTGVTPAERLLELYHGKWEQSVDHVFDELLY.

Residues 1–59 (MTTIFRLASSSSPSLRHDATPHNFHIRKTSISNTFSFSSKNSLSFKRILTSGGSRRFIV) constitute a chloroplast transit peptide. Disulfide bonds link Cys172/Cys392 and Cys335/Cys350.

This sequence belongs to the carboxylate-amine ligase family. Glutamate--cysteine ligase type 2 subfamily. Homodimer or monomer when oxidized or reduced, respectively. Post-translationally, the Cys-172-Cys-392 disulfide bridge is known to modulate the enzyme activity according to the redox status. The oxidized form constitutes the active enzyme.

Its subcellular location is the plastid. It localises to the chloroplast. It carries out the reaction L-cysteine + L-glutamate + ATP = gamma-L-glutamyl-L-cysteine + ADP + phosphate + H(+). It participates in sulfur metabolism; glutathione biosynthesis; glutathione from L-cysteine and L-glutamate: step 1/2. This is Glutamate--cysteine ligase, chloroplastic (GSH1) from Medicago truncatula (Barrel medic).